The primary structure comprises 447 residues: UDP-N-acetylmuramoylalanine--D-glutamate ligase (447 aa).

Residue 130–136 (GTSGKTT) coordinates ATP.

Belongs to the MurCDEF family.

It localises to the cytoplasm. The catalysed reaction is UDP-N-acetyl-alpha-D-muramoyl-L-alanine + D-glutamate + ATP = UDP-N-acetyl-alpha-D-muramoyl-L-alanyl-D-glutamate + ADP + phosphate + H(+). It participates in cell wall biogenesis; peptidoglycan biosynthesis. Functionally, cell wall formation. Catalyzes the addition of glutamate to the nucleotide precursor UDP-N-acetylmuramoyl-L-alanine (UMA). This chain is UDP-N-acetylmuramoylalanine--D-glutamate ligase, found in Oleidesulfovibrio alaskensis (strain ATCC BAA-1058 / DSM 17464 / G20) (Desulfovibrio alaskensis).